Consider the following 129-residue polypeptide: Small ribosomal subunit protein uS8 (129 aa).

This sequence belongs to the universal ribosomal protein uS8 family. As to quaternary structure, part of the 30S ribosomal subunit.

In terms of biological role, one of the primary rRNA binding proteins, it binds directly to 16S rRNA central domain where it helps coordinate assembly of the platform of the 30S subunit. In Thermoplasma volcanium (strain ATCC 51530 / DSM 4299 / JCM 9571 / NBRC 15438 / GSS1), this protein is Small ribosomal subunit protein uS8.